A 1369-amino-acid polypeptide reads, in one-letter code: Phosphoribosylformylglycinamidine synthase (1369 aa).

Disordered regions lie at residues 321–352 (HPTA…AKPK) and 373–400 (ENAR…KPDR). Residue 330–341 (GASTGAGGEIRD) coordinates ATP. Ala-721 provides a ligand contact to ATP. Mg(2+) contacts are provided by Asp-722, Glu-761, Asn-765, and Asp-934. Position 936 (Ser-936) interacts with ATP. Residues 1116 to 1369 (MAILREQGVN…MFRNARKQMG (254 aa)) enclose the Glutamine amidotransferase type-1 domain. The active-site Nucleophile is Cys-1209. Catalysis depends on residues His-1330 and Glu-1332.

The protein in the N-terminal section; belongs to the FGAMS family. Monomer.

Its subcellular location is the cytoplasm. The enzyme catalyses N(2)-formyl-N(1)-(5-phospho-beta-D-ribosyl)glycinamide + L-glutamine + ATP + H2O = 2-formamido-N(1)-(5-O-phospho-beta-D-ribosyl)acetamidine + L-glutamate + ADP + phosphate + H(+). The protein operates within purine metabolism; IMP biosynthesis via de novo pathway; 5-amino-1-(5-phospho-D-ribosyl)imidazole from N(2)-formyl-N(1)-(5-phospho-D-ribosyl)glycinamide: step 1/2. Phosphoribosylformylglycinamidine synthase involved in the purines biosynthetic pathway. Catalyzes the ATP-dependent conversion of formylglycinamide ribonucleotide (FGAR) and glutamine to yield formylglycinamidine ribonucleotide (FGAM) and glutamate. In Ralstonia nicotianae (strain ATCC BAA-1114 / GMI1000) (Ralstonia solanacearum), this protein is Phosphoribosylformylglycinamidine synthase.